Consider the following 300-residue polypeptide: Ribokinase (300 aa).

Substrate is bound by residues 11-13 (SMD), 39-43 (GKGAN), and Glu139. Residues Asn183 and 210 to 215 (TLGSEG) contribute to the ATP site. K(+) is bound by residues Asp236 and Thr238. 241–242 (GD) contributes to the ATP binding site. Residue Asp242 coordinates substrate. Catalysis depends on Asp242, which acts as the Proton acceptor. The K(+) site is built by Ser272, Lys275, and Gly277.

It belongs to the carbohydrate kinase PfkB family. Ribokinase subfamily. Homodimer. Requires Mg(2+) as cofactor.

Its subcellular location is the cytoplasm. It catalyses the reaction D-ribose + ATP = D-ribose 5-phosphate + ADP + H(+). The protein operates within carbohydrate metabolism; D-ribose degradation; D-ribose 5-phosphate from beta-D-ribopyranose: step 2/2. Its activity is regulated as follows. Activated by a monovalent cation that binds near, but not in, the active site. The most likely occupant of the site in vivo is potassium. Ion binding induces a conformational change that may alter substrate affinity. Catalyzes the phosphorylation of ribose at O-5 in a reaction requiring ATP and magnesium. The resulting D-ribose-5-phosphate can then be used either for sythesis of nucleotides, histidine, and tryptophan, or as a component of the pentose phosphate pathway. The protein is Ribokinase of Lactococcus lactis subsp. lactis (strain IL1403) (Streptococcus lactis).